The chain runs to 295 residues: Gamma-glutamyl-L-1-hydroxyisopropylamide hydrolase (295 aa).

One can recognise a Glutamine amidotransferase type-1 domain in the interval 5–221 (RILICDGNTE…LRESARSLVE (217 aa)). The active-site Nucleophile is the Cys104. Residues His200 and Glu202 contribute to the active site.

The catalysed reaction is gamma-L-glutamyl-L-alaninol + H2O = L-alaninol + L-glutamate. Involved in the degradation of isopropylamine, which is a constituent of the herbicides atrazine. Catalyzes the hydrolysis of gamma-glutamyl-L-alaninol (GALO) to L-alaninol and L-glutamate. It can also uses gamma-glutamyl-isopropylamide, gamma-glutamyl-ethylamide, L-glutamine, and gamma-glutamyl-p-nitroanilide. The sequence is that of Gamma-glutamyl-L-1-hydroxyisopropylamide hydrolase (ipuF) from Pseudomonas sp.